Here is a 398-residue protein sequence, read N- to C-terminus: Argininosuccinate synthase (398 aa).

9–17 (AYSGGLDTS) contacts ATP. Tyr-85 serves as a coordination point for L-citrulline. ATP is bound at residue Gly-115. L-aspartate-binding residues include Thr-117, Asn-121, and Asp-122. Position 121 (Asn-121) interacts with L-citrulline. Residues Arg-125, Ser-173, Glu-258, and Tyr-270 each coordinate L-citrulline.

The protein belongs to the argininosuccinate synthase family. Type 1 subfamily. As to quaternary structure, homotetramer.

The protein resides in the cytoplasm. The enzyme catalyses L-citrulline + L-aspartate + ATP = 2-(N(omega)-L-arginino)succinate + AMP + diphosphate + H(+). Its pathway is amino-acid biosynthesis; L-arginine biosynthesis; L-arginine from L-ornithine and carbamoyl phosphate: step 2/3. The protein is Argininosuccinate synthase of Streptococcus pneumoniae (strain Hungary19A-6).